The primary structure comprises 203 residues: SCO2-like protein RT0576 (203 aa).

Residues 42-203 (KDNIKIGEAF…KEIMEFLRNE (162 aa)) enclose the Thioredoxin domain. The Cu cation site is built by Cys-80, Cys-84, and His-170.

Belongs to the SCO1/2 family.

In Rickettsia typhi (strain ATCC VR-144 / Wilmington), this protein is SCO2-like protein RT0576.